Reading from the N-terminus, the 231-residue chain is MAKLTKKQKALASKVVAQKLYPLQEALTLAKETAIAKFDESIDVAVNLGVDARKSDQVVRGSVVLPAGTGKSVRVAVFAQGEKAEAAKAAGAEVVGFDDLAAEVKAGNLNFDVVIATPDAMKVVGQLGQILGPRGLMPNPKVGTVTMDVVTAVKNAKAGQVQYRTDKAGIIHATIGRASFSVESLESNLKALIDALAKAKPASSKGQYLKKIAVSATMGPGVRVDQSTVVA.

This sequence belongs to the universal ribosomal protein uL1 family. In terms of assembly, part of the 50S ribosomal subunit.

In terms of biological role, binds directly to 23S rRNA. The L1 stalk is quite mobile in the ribosome, and is involved in E site tRNA release. Functionally, protein L1 is also a translational repressor protein, it controls the translation of the L11 operon by binding to its mRNA. The chain is Large ribosomal subunit protein uL1 from Dechloromonas aromatica (strain RCB).